A 201-amino-acid polypeptide reads, in one-letter code: 3-isopropylmalate dehydratase small subunit (201 aa).

This sequence belongs to the LeuD family. LeuD type 1 subfamily. In terms of assembly, heterodimer of LeuC and LeuD.

The catalysed reaction is (2R,3S)-3-isopropylmalate = (2S)-2-isopropylmalate. It participates in amino-acid biosynthesis; L-leucine biosynthesis; L-leucine from 3-methyl-2-oxobutanoate: step 2/4. Catalyzes the isomerization between 2-isopropylmalate and 3-isopropylmalate, via the formation of 2-isopropylmaleate. The chain is 3-isopropylmalate dehydratase small subunit from Nitrobacter hamburgensis (strain DSM 10229 / NCIMB 13809 / X14).